The primary structure comprises 550 residues: MRRSKTRRIFHVSITLLLVSTIFCQNGTKPHNNSTSDQMSSSWSNRSQTMYSNASSLLSDLLLDYDIRLRPGFGGDALLLTMDIIIASFDSISEVDMDYTLTMYLHQYWTDERLRWSNEIPIDEMTLSGEFSQNIWVPDTFLANDKHSYLHEVTERNKMLRINVDGKVAYGMRLTSTLSCSMNLRNFPLDSQNCTVEIESYGYTTSEVLMKWNYPLAVHGVEQADVPQFTITGFHTEDSIVSTATGSYQRLSLVFQLRRSVGYFIFQTYLPCVLIVMLSWVSFWINHEATSARVALGITTVLTMTTISTGVRQSLPRISYVKSIDIYLVMCFVFVFAALLEYAAVNYSYWGRERGKGGGGNEWPVNGANKEDRESAVNVQKWVPSGLMDGVPQPQDRRVEALEEAMSTSNTAAQNNNFESTSKPKKRSSSPIPPLCRAGNTISEESESPDYPRYSTTSLKGARPHASLNHKTHHLKGRSSARAKRRMTLARMNVSMKQSISGIGRRARKVIPTIRVRDVNLIDKYSRVVFPVCFIVFNLFYWSYYMMVPS.

The first 24 residues, 1-24 (MRRSKTRRIFHVSITLLLVSTIFC), serve as a signal peptide directing secretion. Residues 25 to 264 (QNGTKPHNNS…FQLRRSVGYF (240 aa)) lie on the Extracellular side of the membrane. Residues Asn26, Asn32, Asn33, Asn45, Asn53, and Asn193 are each glycosylated (N-linked (GlcNAc...) asparagine). A disulfide bridge links Cys180 with Cys194. The next 3 helical transmembrane spans lie at 265–285 (IFQT…SFWI), 292–311 (ARVA…STGV), and 324–344 (IDIY…EYAA). Residues 345–527 (VNYSYWGRER…DVNLIDKYSR (183 aa)) lie on the Cytoplasmic side of the membrane. Residues 405 to 465 (AMSTSNTAAQ…TTSLKGARPH (61 aa)) form a disordered region. A compositionally biased stretch (polar residues) spans 406-421 (MSTSNTAAQNNNFEST). Residues 528–548 (VVFPVCFIVFNLFYWSYYMMV) traverse the membrane as a helical segment.

It belongs to the ligand-gated ion channel (TC 1.A.9) family. Gamma-aminobutyric acid receptor (TC 1.A.9.5) subfamily.

It is found in the postsynaptic cell membrane. The protein localises to the cell membrane. Its function is as follows. GABA, an inhibitory neurotransmitter, mediates neuronal inhibition by binding to the GABA receptor and opening an integral chloride channel. This chain is Gamma-aminobutyric acid receptor subunit beta (gab-1), found in Caenorhabditis elegans.